Here is a 798-residue protein sequence, read N- to C-terminus: Integrin beta-1 (798 aa).

An N-terminal signal peptide occupies residues 1–20 (MNLQLIFWIGLISSVCCVFG). Over 21-728 (QADENRCLKA…ETPECPTGPD (708 aa)) the chain is Extracellular. In terms of domain architecture, PSI spans 26-76 (RCLKANAKSCGECIQAGPNCGWCTNSTFLQEGMPTSARCDDLEALKKKGCH). 28 disulfide bridges follow: C27-C45, C35-C464, C38-C64, C48-C75, C207-C213, C261-C301, C401-C415, C435-C462, C466-C486, C477-C489, C491-C500, C502-C533, C516-C531, C525-C536, C538-C553, C555-C576, C560-C574, C568-C579, C581-C590, C592-C615, C599-C613, C607-C618, C620-C630, C633-C636, C640-C691, C646-C665, C649-C661, and C699-C723. N50 is a glycosylation site (N-linked (GlcNAc...) asparagine). Over residues 75–91 (CHPNDIENPRGSKDIKK) the composition is skewed to basic and acidic residues. Residues 75–105 (CHPNDIENPRGSKDIKKNKNVTNRSKGTAEK) are disordered. N94 and N97 each carry an N-linked (GlcNAc...) asparagine glycan. The VWFA domain maps to 140–378 (DYPIDLYYLM…QLIIDAYNSL (239 aa)). Mg(2+) contacts are provided by S152 and S154. The Ca(2+) site is built by S154, D157, D158, and E189. The interval 207–213 (CTNEQNC) is CX3CL1-binding. N212 is a glycosylation site (N-linked (GlcNAc...) asparagine). Ca(2+)-binding residues include N244, D246, P248, and E249. Residue E249 coordinates Mg(2+). N-linked (GlcNAc...) asparagine glycosylation is present at N269. Positions 295–314 (LPNDGQCHLENDVYTMSHYY) are CX3CL1-binding. A362 provides a ligand contact to Ca(2+). 3 N-linked (GlcNAc...) asparagine glycosylation sites follow: N363, N406, and N417. The interval 383–465 (ILENSKLPEG…IILQFICECE (83 aa)) is interaction with TMEM182. I-EGF domains lie at 466-501 (CQGEGIPGSPKCHDGNGTFECGACRCNEGRVGRHCE), 502-554 (CSTD…KFCE), 555-591 (CDNFNCDRSNGLICGGNGVCKCRVCECNPNYTGSACD), and 592-631 (CSLDTTSCMAVNGQICNGRGVCECGACKCTDPKFQGPTCE). An N-linked (GlcNAc...) asparagine glycan is attached at N481. N-linked (GlcNAc...) asparagine glycosylation is present at N520. N-linked (GlcNAc...) asparagine glycosylation is present at N584. N669 is a glycosylation site (N-linked (GlcNAc...) asparagine). A helical membrane pass occupies residues 729–749 (IIPIVAGVVAGIVLIGLALLL). Residues 750 to 798 (IWKLLMIIHDRREFAKFEKEKMNAKWDTGENPIYKSAVTTVVNPKYEGK) lie on the Cytoplasmic side of the membrane. The segment at 762 to 767 (EFAKFE) is signal for sorting from recycling endosomes; interaction with ACAP1. Phosphothreonine is present on T777. Y783 bears the Phosphotyrosine mark. S785 is subject to Phosphoserine. The tract at residues 785-792 (SAVTTVVN) is interaction with ITGB1BP1. T789 carries the post-translational modification Phosphothreonine. K794 carries the N6-acetyllysine; alternate modification. K794 participates in a covalent cross-link: Glycyl lysine isopeptide (Lys-Gly) (interchain with G-Cter in SUMO1); alternate.

It belongs to the integrin beta chain family. As to quaternary structure, interacts with seprase FAP (seprase); the interaction occurs at the cell surface of invadopodia membrane in a collagen-dependent manner. Heterodimer of an alpha and a beta subunit. Beta-1 associates with either alpha-1, alpha-2, alpha-3, alpha-4, alpha-5, alpha-6, alpha-7, alpha-8, alpha-9, alpha-10, alpha-11 or alpha-V. ITGA6:ITGB1 is found in a complex with CD9; interaction takes place in oocytes and is involved in sperm-egg fusion. Binds LGALS3BP and NMRK2, when associated with alpha-7, but not with alpha-5. Interacts with FLNB, FLNC and RANBP9. Interacts with KRT1 in the presence of RACK1 and SRC. Interacts with JAML; integrin alpha-4/beta-1 may regulate leukocyte to endothelial cells adhesion by controlling JAML homodimerization. Interacts with RAB21. Interacts (via the cytoplasmic region) with RAB25 (via the hypervariable C-terminal region). Interacts with MYO10. Interacts with ITGB1BP1 (via C-terminal region); the interaction is a prerequisite for focal adhesion disassembly. Interacts with TLN1; the interaction is prevented by competitive binding of ITGB1BP1. Interacts with ACAP1; required for ITGB1 recycling. Interacts with ASAP3. Interacts with FERMT2; the interaction is inhibited in presence of ITGB1BP1. Interacts with DAB2. Interacts with FGR and HCK. Interacts with EMP2; the interaction may be direct or indirect and ITGB1 has a heterodimer form. ITGA5:ITGB1 interacts with CCN3. ITGA4:ITGB1 is found in a ternary complex with CX3CR1 and CX3CL1. ITGA5:ITGB1 interacts with FBN1. ITGA5:ITGB1 interacts with IL1B. Interacts with MDK. ITGA4:ITGB1 interacts with MDK; this interaction mediates MDK-induced osteoblast cells migration through PXN phosphorylation. ITGA6:ITGB1 interacts with MDK; this interaction mediates MDK-induced neurite-outgrowth. ITGA5:ITGB1 interacts with ACE2. Interacts with TMEM182 and LAMB1. Interacts with tensin TNS3; TNS3 also interacts with PEAK1, thus acting as an adapter molecule to bridge the association of PEAK1 with ITGB1. Interacts with tensin TNS4; the interaction displaces tensin TNS3 from the ITGB1 cytoplasmic tail and promotes ITGB1 stability. Integrin ITGA9:ITGB1 interacts with SPP1/OPN (via N-terminus). Integrin ITGA9:ITGB1 interacts with TNC/TNFN3 (via the 3rd Fibronectin type-III domain). Integrins ITGA4:ITGB1 and ITGA9:ITGB1 interact with SVEP1 (via Sushi domain 21); thereby inhibit Ca(2+) intracellular signaling and as a result repress vasocontraction. ITGA4:ITGB1 and ITGA5:ITGB1 interacts with SELP. Interacts with CD248. ITGA5:ITGB1 interacts with IGFBP1. ITGA4:ITGB1 interacts with BCAM. Interacts with ADGRG6. Interacts with the C-terminal region of FLNC. Interacts with filamin FLNA isoform 3/VAR-1. In terms of assembly, interacts with ACE2. Interacts with alpha-7B in cardiomyocytes of adult heart and alpha-7A and alpha-7B in adult skeletal muscle. Interacts with filamin FLNA isoform 3/VAR-1.

It localises to the cell membrane. The protein localises to the cell projection. The protein resides in the invadopodium membrane. Its subcellular location is the ruffle membrane. It is found in the recycling endosome. It localises to the melanosome. The protein localises to the lamellipodium. The protein resides in the ruffle. Its subcellular location is the cell junction. It is found in the focal adhesion. It localises to the sarcolemma. In terms of biological role, integrins alpha-1/beta-1, alpha-2/beta-1, alpha-10/beta-1 and alpha-11/beta-1 are receptors for collagen. Integrins alpha-1/beta-1 and alpha-2/beta-2 recognize the proline-hydroxylated sequence G-F-P-G-E-R in collagen. Integrins alpha-2/beta-1, alpha-3/beta-1, alpha-4/beta-1, alpha-5/beta-1, alpha-8/beta-1, alpha-10/beta-1, alpha-11/beta-1 and alpha-V/beta-1 are receptors for fibronectin. Alpha-4/beta-1 recognizes one or more domains within the alternatively spliced CS-1 and CS-5 regions of fibronectin. Integrin alpha-5/beta-1 is a receptor for fibrinogen. Integrin alpha-1/beta-1, alpha-2/beta-1, alpha-6/beta-1 and alpha-7/beta-1 are receptors for lamimin. Integrin alpha-6/beta-1 (ITGA6:ITGB1) is present in oocytes and is involved in sperm-egg fusion. Integrin alpha-4/beta-1 is a receptor for VCAM1 and recognizes the sequence Q-I-D-S in VCAM1. Integrin alpha-9/beta-1 is a receptor for VCAM1, cytotactin and osteopontin. It recognizes the sequence A-E-I-D-G-I-E-L in cytotactin. Integrin alpha-3/beta-1 is a receptor for epiligrin, thrombospondin and CSPG4. Integrin alpha-3/beta-1 provides a docking site for FAP (seprase) at invadopodia plasma membranes in a collagen-dependent manner and hence may participate in the adhesion, formation of invadopodia and matrix degradation processes, promoting cell invasion. Alpha-3/beta-1 may mediate with LGALS3 the stimulation by CSPG4 of endothelial cells migration. Integrin alpha-V/beta-1 is a receptor for vitronectin. Beta-1 integrins recognize the sequence R-G-D in a wide array of ligands. When associated with alpha-7/beta-1 integrin, regulates cell adhesion and laminin matrix deposition. Involved in promoting endothelial cell motility and angiogenesis. Involved in osteoblast compaction through the fibronectin fibrillogenesis cell-mediated matrix assembly process and the formation of mineralized bone nodules. May be involved in up-regulation of the activity of kinases such as PKC via binding to KRT1. Together with KRT1 and RACK1, serves as a platform for SRC activation or inactivation. Plays a mechanistic adhesive role during telophase, required for the successful completion of cytokinesis. ITGA4:ITGB1 binds to fractalkine (CX3CL1) and may act as its coreceptor in CX3CR1-dependent fractalkine signaling. ITGA4:ITGB1 and ITGA5:ITGB1 bind to PLA2G2A via a site (site 2) which is distinct from the classical ligand-binding site (site 1) and this induces integrin conformational changes and enhanced ligand binding to site 1. ITGA5:ITGB1 acts as a receptor for fibrillin-1 (FBN1) and mediates R-G-D-dependent cell adhesion to FBN1. ITGA5:ITGB1 acts as a receptor for fibronectin FN1 and mediates R-G-D-dependent cell adhesion to FN1. ITGA5:ITGB1 is a receptor for IL1B and binding is essential for IL1B signaling. ITGA5:ITGB3 is a receptor for soluble CD40LG and is required for CD40/CD40LG signaling. Plays an important role in myoblast differentiation and fusion during skeletal myogenesis. ITGA9:ITGB1 may play a crucial role in SVEP1/polydom-mediated myoblast cell adhesion. Integrins ITGA9:ITGB1 and ITGA4:ITGB1 repress PRKCA-mediated L-type voltage-gated channel Ca(2+) influx and ROCK-mediated calcium sensitivity in vascular smooth muscle cells via their interaction with SVEP1, thereby inhibit vasocontraction. This Bos taurus (Bovine) protein is Integrin beta-1 (ITGB1).